Consider the following 620-residue polypeptide: Chaperone protein HtpG (620 aa).

Positions 1–334 are a; substrate-binding; sequence MTTTDTAPQT…SEDLPLNLSR (334 aa). Residues 335–548 form a b region; that stretch reads EMLQNNPQLV…GQGPDRALER (214 aa). The interval 549–620 is c; that stretch reads MLAQQNRGGA…RINRLVLRAL (72 aa).

This sequence belongs to the heat shock protein 90 family. Homodimer.

Its subcellular location is the cytoplasm. Its function is as follows. Molecular chaperone. Has ATPase activity. This Rhodopseudomonas palustris (strain BisA53) protein is Chaperone protein HtpG.